The chain runs to 101 residues: Protein RnfH (101 aa).

It belongs to the UPF0125 (RnfH) family.

This Coxiella burnetii (strain RSA 331 / Henzerling II) protein is Protein RnfH.